Reading from the N-terminus, the 337-residue chain is MQAFVNRLWYPKGFLDTQSKGLFLLLKIIQLLLLPLSLLFAAITALRRSLFKIGIKKQSRLPVPVIVVGNITVGGSGKTPTVIYLVELLRRHGYQPGVISRGYGVNFEGVRSVLPSMAARDVGDEPAMIVGRTGVPMVIGRNRIDAGEHLLTHFNVDVIISDDGLQHYALGRDIELLILDGDRRFGNGSLLPAGPLREGLWRVKKVDAVVVNGGQSIEGEHAMSLVPSALKPVTHSNEQPPALNDAVVAIAGIGNPQRFFTSLINAGFNLNGVKAFEDHQAYCEEELTELCGDLPIIMTEKDAVKCRDFAKQNWWYLPVDAKLSSNFDRLILDKLKR.

ATP is bound at residue 72–79 (TVGGSGKT).

It belongs to the LpxK family.

The enzyme catalyses a lipid A disaccharide + ATP = a lipid IVA + ADP + H(+). The protein operates within glycolipid biosynthesis; lipid IV(A) biosynthesis; lipid IV(A) from (3R)-3-hydroxytetradecanoyl-[acyl-carrier-protein] and UDP-N-acetyl-alpha-D-glucosamine: step 6/6. Its function is as follows. Transfers the gamma-phosphate of ATP to the 4'-position of a tetraacyldisaccharide 1-phosphate intermediate (termed DS-1-P) to form tetraacyldisaccharide 1,4'-bis-phosphate (lipid IVA). This Shewanella sediminis (strain HAW-EB3) protein is Tetraacyldisaccharide 4'-kinase.